The chain runs to 2602 residues: Non-reducing polyketide synthase SAT8 (2602 aa).

The active-site Nucleophile; for transacylase activity is the Cys-130. His-249 (proton donor/acceptor; for transacylase activity) is an active-site residue. The disordered stretch occupies residues 379-398 (MLENSTSPPSPAATSSNSHC). Residues 382–396 (NSTSPPSPAATSSNS) are compositionally biased toward low complexity. Residues 404 to 822 (PRDIAIVGMS…GSNAAMVVTQ (419 aa)) enclose the Ketosynthase family 3 (KS3) domain. Residues Cys-571, His-706, and His-745 each act as for beta-ketoacyl synthase activity in the active site. The interval 926–1216 (FGGQMSTFVG…AMARRSLDSN (291 aa)) is malonyl-CoA:ACP transacylase (MAT). The N-terminal hotdog fold stretch occupies residues 1298–1442 (GPLFGLLTFV…GKLDLLSSSE (145 aa)). The region spanning 1298–1618 (GPLFGLLTFV…YTRIPRHSMT (321 aa)) is the PKS/mFAS DH domain. Residues 1331-1616 (LVIPHIIART…IAYTRIPRHS (286 aa)) are product template (PT) domain. Residue His-1335 is the Proton acceptor; for dehydratase activity of the active site. A C-terminal hotdog fold region spans residues 1467-1618 (GDVSGLQGRS…YTRIPRHSMT (152 aa)). The active-site Proton donor; for dehydratase activity is the Asp-1524. One can recognise a Carrier domain in the interval 1658 to 1733 (DTLKQTVGQI…AFVRYISKVV (76 aa)). The residue at position 1692 (Ser-1692) is an O-(pantetheine 4'-phosphoryl)serine. Positions 1737–1772 (DDLGTPSHSDNDSHVTGTTATPNSSSASSDTHHGNS) are disordered. Over residues 1752-1765 (TGTTATPNSSSASS) the composition is skewed to low complexity. Positions 1979–2150 (VEKVKDDFQG…GYGHVDWTDG (172 aa)) are methyltransferase domain. Positions 2229 to 2530 (IVVVTGATGS…IPLGEWVRKV (302 aa)) are NADPH-binding domain.

Pantetheine 4'-phosphate is required as a cofactor.

It functions in the pathway mycotoxin biosynthesis. Functionally, non-reducing polyketide synthase; part of the satratoxin SC1 cluster involved in the biosynthesis of satratoxins, trichothecene mycotoxins that are associated with human food poisonings. Satratoxins are suggested to be made by products of multiple gene clusters (SC1, SC2 and SC3) that encode 21 proteins in all, including polyketide synthases, acetyltransferases, and other enzymes expected to modify the trichothecene skeleton. SC1 encodes 10 proteins, SAT1 to SAT10. The largest are SAT8, which encodes a putative polyketide synthase (PKS) with a conventional non-reducing architecture, and SAT10, a putative protein containing four ankyrin repeats and thus may be involved in protein scaffolding. The putative short-chain reductase SAT3 may assist the PKS in some capacity. SAT6 contains a secretory lipase domain and acts probably as a trichothecene esterase. SAT5 encodes a putative acetyltransferase, and so, with SAT6, may affect endogenous protection from toxicity. The probable transcription factor SAT9 may regulate the expression of the SC1 cluster. SC2 encodes proteins SAT11 to SAT16, the largest of which encodes the putative reducing PKS SAT13. SAT11 is a cytochrome P450 monooxygenase, while SAT14 and SAT16 are probable acetyltransferases. The SC2 cluster may be regulated by the transcription factor SAT15. SC3 is a small cluster that encodes 5 proteins, SAT17 to SAT21. SAT21 is a putative MFS-type transporter which may have a role in exporting secondary metabolites. The four other proteins putatively encoded in SC3 include the taurine hydroxylase-like protein SAT17, the O-methyltransferase SAT18, the acetyltransferase SAT19, and the Cys6-type zinc finger SAT20, the latter being probably involved in regulation of SC3 expression. This chain is Non-reducing polyketide synthase SAT8, found in Stachybotrys chartarum (strain CBS 109288 / IBT 7711) (Toxic black mold).